A 99-amino-acid polypeptide reads, in one-letter code: Class II hydrophobin 1 (99 aa).

Positions 1-26 are cleaved as a signal peptide; sequence MKFIAVVAALTASLAMAAPTESSTDT. Disulfide bonds link C31-C80, C41-C71, C42-C54, and C81-C92.

It belongs to the cerato-ulmin hydrophobin family. Homotetramer. Further self-assembles to form highly ordered films at water-air interfaces through intermolecular interactions.

The protein resides in the secreted. Its subcellular location is the cell wall. Functionally, aerial growth, conidiation, and dispersal of filamentous fungi in the environment rely upon a capability of their secreting small amphipathic proteins called hydrophobins (HPBs) with low sequence identity. Class I can self-assemble into an outermost layer of rodlet bundles on aerial cell surfaces, conferring cellular hydrophobicity that supports fungal growth, development and dispersal; whereas Class II form highly ordered films at water-air interfaces through intermolecular interactions but contribute nothing to the rodlet structure. HFB1 is a class II hydrophobin that shows antifungal activity against pathogenic and opportunistic fungi such as Cryptococcus neoformans, Nakaseomyces glabrataa, or Candida tropicalis. In Sodiomyces alkalinus (strain CBS 110278 / VKM F-3762 / F11) (Alkaliphilic filamentous fungus), this protein is Class II hydrophobin 1.